The chain runs to 272 residues: GATA zinc finger domain-containing protein 1 (272 aa).

A GATA-type zinc finger spans residues 9-33; it reads CSVCKTTSSSMWKKGPQGEILCHHC. The tract at residues 67 to 120 is disordered; the sequence is TFASTSAAPPQSNGGGGGKQSKQEIHRRSARLRNTKYKSAPAAEKKVSTKGKGR. Lys-167 is subject to N6-acetyllysine. A Glycyl lysine isopeptide (Lys-Gly) (interchain with G-Cter in SUMO2) cross-link involves residue Lys-265.

Its subcellular location is the nucleus. The chain is GATA zinc finger domain-containing protein 1 (GATAD1) from Bos taurus (Bovine).